We begin with the raw amino-acid sequence, 270 residues long: Extracellular metalloprotease MCYG_04966 (270 aa).

The signal sequence occupies residues 1–19 (MRLSLFLSGLAAAGSIVSA). Asn135 carries an N-linked (GlcNAc...) asparagine glycan. His184 lines the Zn(2+) pocket. Residue Glu185 is part of the active site. His188 lines the Zn(2+) pocket. N-linked (GlcNAc...) asparagine glycosylation is present at Asn199. The disordered stretch occupies residues 208–227 (VADTPPQSKKTSGCPNSQDS). Polar residues predominate over residues 212 to 227 (PPQSKKTSGCPNSQDS). Cys221 and Cys247 are joined by a disulfide.

The protein belongs to the peptidase M43B family.

The protein resides in the secreted. Secreted metalloproteinase that allows assimilation of proteinaceous substrates. Plays a pivotal role as a pathogenicity determinant during infections and contributes to the ability of the pathogen to persist within the mammalian host. This is Extracellular metalloprotease MCYG_04966 from Arthroderma otae (strain ATCC MYA-4605 / CBS 113480) (Microsporum canis).